The chain runs to 375 residues: MIGLLIGGVLGLVLSAAGTPLFIRFLVKRGYGQFVRDDGPTTHKTKRGTPTMGGAVIIGSLVLAYLITHGLLAVLGVDFGGPTASGLILLLLTVGMAFVGFVDDFTKITKQRSLGLTPRGKIILQALIGTAFAVLALNFPDERGLTPASTAISFARDIPWLDLAFAGPAIGVILFVIWSNLITTATTNAVNLTDGLDGLATGATAMITGAYVLISLFQSSQSCALEGTRGCYEVRDPMDLALLAAILTGSLLGFLWWNTSPAKIFMGDTGSLGLGGALAGFAIFTRTEILVAVLAGLMVAITLSVIIQVGWFKVSGGKRVFLMAPLQHHFELKGWAEVTVVVRFWLLSLMCVTVGLAIFYGDWLIRQGGLAGVTP.

Helical transmembrane passes span 2-22, 55-75, 82-102, 120-140, 158-178, 198-218, 237-257, 264-284, 289-309, and 345-365; these read IGLL…TPLF, AVII…LAVL, PTAS…VGFV, GKII…LNFP, IPWL…FVIW, GLAT…SLFQ, PMDL…FLWW, IFMG…FAIF, ILVA…IIQV, and WLLS…DWLI.

The protein belongs to the glycosyltransferase 4 family. MraY subfamily. It depends on Mg(2+) as a cofactor.

The protein localises to the cell membrane. It carries out the reaction UDP-N-acetyl-alpha-D-muramoyl-L-alanyl-gamma-D-glutamyl-meso-2,6-diaminopimeloyl-D-alanyl-D-alanine + di-trans,octa-cis-undecaprenyl phosphate = di-trans,octa-cis-undecaprenyl diphospho-N-acetyl-alpha-D-muramoyl-L-alanyl-D-glutamyl-meso-2,6-diaminopimeloyl-D-alanyl-D-alanine + UMP. Its pathway is cell wall biogenesis; peptidoglycan biosynthesis. In terms of biological role, catalyzes the initial step of the lipid cycle reactions in the biosynthesis of the cell wall peptidoglycan: transfers peptidoglycan precursor phospho-MurNAc-pentapeptide from UDP-MurNAc-pentapeptide onto the lipid carrier undecaprenyl phosphate, yielding undecaprenyl-pyrophosphoryl-MurNAc-pentapeptide, known as lipid I. This is Phospho-N-acetylmuramoyl-pentapeptide-transferase from Micrococcus luteus (strain ATCC 4698 / DSM 20030 / JCM 1464 / CCM 169 / CCUG 5858 / IAM 1056 / NBRC 3333 / NCIMB 9278 / NCTC 2665 / VKM Ac-2230) (Micrococcus lysodeikticus).